Reading from the N-terminus, the 154-residue chain is Large ribosomal subunit protein uL13 (154 aa).

It belongs to the universal ribosomal protein uL13 family. As to quaternary structure, part of the 50S ribosomal subunit.

Its function is as follows. This protein is one of the early assembly proteins of the 50S ribosomal subunit, although it is not seen to bind rRNA by itself. It is important during the early stages of 50S assembly. In Rhodopseudomonas palustris (strain ATCC BAA-98 / CGA009), this protein is Large ribosomal subunit protein uL13.